We begin with the raw amino-acid sequence, 249 residues long: Tetraspanin-7 (249 aa).

The Cytoplasmic portion of the chain corresponds to 1 to 16; that stretch reads MASRRMETKPVITCLK. A helical transmembrane segment spans residues 17 to 40; the sequence is TLLIIYSFVFWITGVILLAVGVWG. At 41–56 the chain is on the extracellular side; that stretch reads KLTLGTYISLIAENST. The N-linked (GlcNAc...) asparagine glycan is linked to asparagine 54. The chain crosses the membrane as a helical span at residues 57 to 75; sequence NAPYVLIGTGTTIVVFGLF. Topologically, residues 76 to 86 are cytoplasmic; sequence GCFATCRGSPW. Residues 87 to 112 traverse the membrane as a helical segment; that stretch reads MLKLYAMFLSLVFLAELVAGISGFVF. At 113 to 213 the chain is on the extracellular side; the sequence is RHEIKDTFLR…LVTSFMETNM (101 aa). 4 N-linked (GlcNAc...) asparagine glycosylation sites follow: asparagine 155, asparagine 158, asparagine 177, and asparagine 188. Residues 214-234 traverse the membrane as a helical segment; that stretch reads GIIAGVAFGIAFSQLIGMLLA. At 235-249 the chain is on the cytoplasmic side; the sequence is CCLSRFITANQYEMV.

Belongs to the tetraspanin (TM4SF) family.

The protein localises to the membrane. Functionally, may be involved in cell proliferation and cell motility. The polypeptide is Tetraspanin-7 (Tspan7) (Mus musculus (Mouse)).